A 166-amino-acid chain; its full sequence is Probable calcium-binding protein CML17 (166 aa).

EF-hand domains are found at residues 12-47, 48-83, 91-126, and 127-162; these read EQIN…LGVK, PSPD…ELLS, YTEE…LGHA, and LTVA…AAFD. Residues Asp25, Asn27, Asp29, Ser31, and Glu36 each contribute to the Ca(2+) site. Asp104, Asp106, Asn108, Glu115, Asp140, Asp142, Asp144, Arg146, and Glu151 together coordinate Ca(2+).

In terms of biological role, potential calcium sensor. The sequence is that of Probable calcium-binding protein CML17 (CML17) from Arabidopsis thaliana (Mouse-ear cress).